Here is a 378-residue protein sequence, read N- to C-terminus: Serpin B6 (378 aa).

An N-acetylmethionine modification is found at methionine 1. Lysine 196 carries the N6-acetyllysine modification.

The protein belongs to the serpin family. Ov-serpin subfamily. As to quaternary structure, forms a complex with the monomeric form of beta-tryptase. As to expression, brain.

It is found in the cytoplasm. Inhibitor of cathepsin G, kallikrein-8 and thrombin. May play an important role in the inner ear in the protection against leakage of lysosomal content during stress. May be involved in the regulation of serine proteinases present in the brain or extravasated from the blood. In Bos taurus (Bovine), this protein is Serpin B6 (SERPINB6).